Here is a 430-residue protein sequence, read N- to C-terminus: Dihydroorotase (430 aa).

The Zn(2+) site is built by His60 and His62. Substrate contacts are provided by residues 62–64 (HLR) and Asn94. 4 residues coordinate Zn(2+): Asp152, His179, His232, and Asp305. Residue Asp305 is part of the active site. Substrate contacts are provided by residues His309 and 323 to 324 (FG).

It belongs to the metallo-dependent hydrolases superfamily. DHOase family. Class I DHOase subfamily. The cofactor is Zn(2+).

The enzyme catalyses (S)-dihydroorotate + H2O = N-carbamoyl-L-aspartate + H(+). It participates in pyrimidine metabolism; UMP biosynthesis via de novo pathway; (S)-dihydroorotate from bicarbonate: step 3/3. Catalyzes the reversible cyclization of carbamoyl aspartate to dihydroorotate. In Solibacter usitatus (strain Ellin6076), this protein is Dihydroorotase.